Consider the following 206-residue polypeptide: Capsid assembly scaffolding protein (206 aa).

A propeptide spanning residues 1 to 13 (MEENKLKFNLQFF) is cleaved from the precursor. Disordered stretches follow at residues 1-50 (MEEN…PEQQ), 83-134 (AAKL…VDSS), and 173-206 (RQSP…IIKN). Composition is skewed to basic and acidic residues over residues 25-38 (GDGK…KEND) and 83-127 (AAKL…KMLS). Residues 173 to 192 (RQSPLTGGDSFNHSTKNKPQ) are compositionally biased toward polar residues. The interval 186-206 (STKNKPQNLAEIARQKRIIKN) is helix-and-hook motif.

Found in the procapsid with the major capsid protein in a 2:1 capsid protein:scaffold protein molecular ratio. Post-translationally, the N-terminus is cleaved by ribosomal processing protease Prp.

Scaffolding protein involved in icosahedric procapsid assembly. Coassembles with capsid protein(s) to form the procapsid. The scaffolding protein is found within the capsid as a series of concentric shells. During DNA packaging, the scaffolding protein molecules are released from the procapsid. This is Capsid assembly scaffolding protein from Staphylococcus phage 80alpha.